The following is a 395-amino-acid chain: Nucleoside diphosphate kinase homolog 7 (395 aa).

In terms of domain architecture, DM10 spans 22–110 (QSERFAFIAE…YTARQLGSRK (89 aa)).

This sequence belongs to the NDK family. In terms of assembly, component of sperm flagellar doublet microtubules. Component of the gamma-tubulin ring complex.

Its subcellular location is the cytoplasm. The protein localises to the cytoskeleton. It is found in the microtubule organizing center. The protein resides in the centrosome. It localises to the nucleus. Its subcellular location is the spindle. The protein localises to the cilium axoneme. It is found in the flagellum axoneme. The protein resides in the cell projection. It localises to the cilium. Its function is as follows. Possesses an intrinsic kinase activity. Displays 3'-5' exonuclease activity with a preference for single-stranded DNA. Does not seem to have nucleoside diphosphate kinase activity. Functional component of the gamma-tubulin ring complex, implicated in the regulation of the microtubule-nucleating activity of the gamma-tubulin ring complex in centrosomes, in a kinase activity-dependent manner. Part of the dynein-decorated doublet microtubules (DMTs) in cilia axoneme, which is required for motile cilia beating. This Mus musculus (Mouse) protein is Nucleoside diphosphate kinase homolog 7.